The primary structure comprises 261 residues: HTH-type transcriptional repressor CsqR (261 aa).

The HTH deoR-type domain maps to 8-63; it reads GNPRHDQLLMLIAERGYMNIDELANLLDVSTQTVRRDIRKLSEQGLITRHHGGAGR. The segment at residues 25 to 44 is a DNA-binding region (H-T-H motif); it reads MNIDELANLLDVSTQTVRRD.

As to quaternary structure, monomer in the absence of DNA. Exhibits a high level of cooperativity once it is bound to its target DNA.

Its activity is regulated as follows. Inactivated in the presence of the effectors sulfoquinovose and sulfoquinovosyl glycerol, leading to the de-repression of the target genes. Involved in the regulation of the sulfoquinovose operon. Represses the expression of the yihUTS operon and of the yihV and csqR genes. Binds DNA inside the spacer between the bidirectional transcription units comprising the yihUTS operon and the yihV gene, and upstream the csqR gene itself. The polypeptide is HTH-type transcriptional repressor CsqR (Escherichia coli (strain K12)).